The chain runs to 726 residues: MNSLQSLCVLCARLNECALDLECLKFCDPVIVLSDMANFKKNGIVILHLYQTFFEGIKEQNLLCASALTVYMQVLLKAMYEQVLLLDAALESFMVDQDRKKYFEKVLCLKRCAEHLSINISLNNGVEFIVQLSTLNDIEQLISKINSVYALLLPQEGLQICGKIIDLLTIMCGACMVAKPESYLETKTCMKCYEELTLTPNQGKSLRKRLHGKFCNHLTEQKAFFNIEKNIETIEKDLGEAILNYGTIQSVVTEIKKIFKQQRSAESLHVSDAEKTLKKYNIFSKVPDVIYSLSEFTYWSKISETIVRNVAITLQQLNSCHTLYKQLQNDVSLYLYGEVSEDFLALSENLLTHDERLYVGSIYVSPSRLIDLVTGLSIKNLEESPIFKRLAEEDEVQHKIKSLLHDIRDPQTTETPGRLNTINCMLQTHNLQQEVLARKKAYFQKVSESGYNRVMACIREQESLINKVVSVNVYGNFIFEALSKIMNGFVLRKMYLDGSIRVDSCTYDEHLYIKNNLMPKKLPLELLPDLSEIMYTLLTGPLSDFHKSAYPLPANISMAYGCDHAEMLPHMKEDLARCIEGTIHPSVWMVCEYNEFFNFSGVTDVNDMQKKMWNFIRELTLSVALYNDVFGKRLKIVRIDEEEDLNGNVVLTFNHESPLLFHTGGGMTKFKDVYSLLYCDLQAQLSRETVDVPEGVSYSVRTPNLLDLVRENEQDESIIPGCLFDE.

The C3H1-type zinc finger occupies 189 to 217; the sequence is CMKCYEELTLTPNQGKSLRKRLHGKFCNH. Position 626–633 (626–633) interacts with ATP; that stretch reads YNDVFGKR.

Belongs to the herpesviridae TRM1 protein family. In terms of assembly, associates with TRM2 and TRM3 to form the tripartite terminase complex. Interacts with portal protein.

Its subcellular location is the host nucleus. Functionally, component of the molecular motor that translocates viral genomic DNA in empty capsid during DNA packaging. Forms a tripartite terminase complex together with TRM2 and TRM3 in the host cytoplasm. Once the complex reaches the host nucleus, it interacts with the capsid portal vertex. This portal forms a ring in which genomic DNA is translocated into the capsid. TRM1 carries an endonuclease activity that plays an important role for the cleavage of concatemeric viral DNA into unit length genomes. The chain is Tripartite terminase subunit 1 from Human herpesvirus 6B (strain Z29) (HHV-6 variant B).